The chain runs to 306 residues: D-alanine--D-alanine ligase B (306 aa).

Residues 101 to 303 (KLLWQGAGLP…FSQLVVRILE (203 aa)) form the ATP-grasp domain. 134-189 (ISALGLPVIVKPSREGSSVGMSKVVAENALQDALRLAFQHDEEVLIEKWLSGPEFT) lines the ATP pocket. Mg(2+) contacts are provided by Asp-257, Glu-270, and Asn-272.

The protein belongs to the D-alanine--D-alanine ligase family. Requires Mg(2+) as cofactor. Mn(2+) serves as cofactor.

It localises to the cytoplasm. The enzyme catalyses 2 D-alanine + ATP = D-alanyl-D-alanine + ADP + phosphate + H(+). It functions in the pathway cell wall biogenesis; peptidoglycan biosynthesis. Functionally, cell wall formation. This chain is D-alanine--D-alanine ligase B, found in Shigella flexneri.